We begin with the raw amino-acid sequence, 502 residues long: Glycerol kinase (502 aa).

ADP is bound at residue Thr-14. Residues Thr-14, Thr-15, and Ser-16 each contribute to the ATP site. Thr-14 is a sn-glycerol 3-phosphate binding site. Arg-18 is an ADP binding site. The sn-glycerol 3-phosphate site is built by Arg-84, Glu-85, and Tyr-136. The glycerol site is built by Arg-84, Glu-85, and Tyr-136. His-232 carries the phosphohistidine; by HPr modification. Asp-246 lines the sn-glycerol 3-phosphate pocket. Positions 246 and 247 each coordinate glycerol. 2 residues coordinate ADP: Thr-268 and Gly-311. ATP contacts are provided by Thr-268, Gly-311, Gln-315, and Gly-412. Residues Gly-412 and Asn-416 each coordinate ADP.

The protein belongs to the FGGY kinase family. In terms of assembly, homotetramer and homodimer (in equilibrium). Post-translationally, the phosphoenolpyruvate-dependent sugar phosphotransferase system (PTS), including enzyme I, and histidine-containing protein (HPr) are required for the phosphorylation, which leads to the activation of the enzyme.

The enzyme catalyses glycerol + ATP = sn-glycerol 3-phosphate + ADP + H(+). It participates in polyol metabolism; glycerol degradation via glycerol kinase pathway; sn-glycerol 3-phosphate from glycerol: step 1/1. Its activity is regulated as follows. Activated by phosphorylation and inhibited by fructose 1,6-bisphosphate (FBP). Its function is as follows. Key enzyme in the regulation of glycerol uptake and metabolism. Catalyzes the phosphorylation of glycerol to yield sn-glycerol 3-phosphate. The chain is Glycerol kinase from Streptococcus pneumoniae serotype 19F (strain G54).